A 571-amino-acid polypeptide reads, in one-letter code: DExH-box ATP-dependent RNA helicase DExH16, mitochondrial (571 aa).

The N-terminal 56 residues, 1 to 56, are a transit peptide targeting the mitochondrion; that stretch reads MAYSVVRLRKVSALGISRVLQADKGSLWRFHFEPEFGDLLRLGVLTRNYRKNSGSP. In terms of domain architecture, Helicase ATP-binding spans 83–212; it reads IARKKKRKVI…HLCGDPAVVP (130 aa). 96–103 serves as a coordination point for ATP; sequence GPTNSGKT. The short motif at 176–179 is the DEIH box; degenerate element; it reads DEIQ. The region spanning 213-399 is the Helicase C-terminal domain; sequence LVEDILKVTG…GLFPTFDLLS (187 aa).

Belongs to the DExH box helicase family. In terms of assembly, homodimer; in free form. Component of the mitochondrial degradosome (mtEXO) complex which is a heteropentamer containing 2 copies of SUPV3L1 and 3 copies of PNPT1. The cofactor is Mg(2+). Mn(2+) serves as cofactor. In terms of tissue distribution, weakly expressed.

Its subcellular location is the nucleus. It localises to the mitochondrion matrix. The protein localises to the mitochondrion nucleoid. It catalyses the reaction ATP + H2O = ADP + phosphate + H(+). Activated by the presence of mitochondrial RNA. Its function is as follows. Major helicase player in mitochondrial RNA metabolism. Component of the mitochondrial degradosome (mtEXO) complex, that degrades 3' overhang double-stranded RNA with a 3'-to-5' directionality in an ATP-dependent manner. ATPase and ATP-dependent multisubstrate helicase, able to unwind double-stranded (ds) DNA and RNA, and RNA/DNA heteroduplexes in the 5'-to-3' direction. Plays a role in the RNA surveillance system in mitochondria; regulates the stability of mature mRNAs, the removal of aberrantly formed mRNAs and the rapid degradation of non coding processing intermediates. Required during pollen development. This is DExH-box ATP-dependent RNA helicase DExH16, mitochondrial from Arabidopsis thaliana (Mouse-ear cress).